We begin with the raw amino-acid sequence, 308 residues long: GTPase Era (308 aa).

In terms of domain architecture, Era-type G spans 14–181; it reads RCGFVALIGA…RRALAAAMPE (168 aa). The G1 stretch occupies residues 22–29; it reads GAPNVGKS. 22 to 29 contacts GTP; that stretch reads GAPNVGKS. Positions 48 to 52 are G2; that stretch reads QTTRA. Residues 69 to 72 are G3; it reads DTPG. Residues 69 to 73 and 131 to 134 each bind GTP; these read DTPGI and NKID. A G4 region spans residues 131 to 134; that stretch reads NKID. The interval 160 to 162 is G5; it reads VAA. A KH type-2 domain is found at 212–289; that stretch reads LHQELPYQST…HLFLFVKVRD (78 aa).

Belongs to the TRAFAC class TrmE-Era-EngA-EngB-Septin-like GTPase superfamily. Era GTPase family. In terms of assembly, monomer.

The protein localises to the cytoplasm. The protein resides in the cell inner membrane. In terms of biological role, an essential GTPase that binds both GDP and GTP, with rapid nucleotide exchange. Plays a role in 16S rRNA processing and 30S ribosomal subunit biogenesis and possibly also in cell cycle regulation and energy metabolism. The sequence is that of GTPase Era from Afipia carboxidovorans (strain ATCC 49405 / DSM 1227 / KCTC 32145 / OM5) (Oligotropha carboxidovorans).